The chain runs to 413 residues: Eukaryotic initiation factor 4A-8 (413 aa).

The Q motif motif lies at 40-68 (DSFDAMGLQENLLRGIYAYGFEKPSAIQQ). Residues 71–241 (IVPFCKGLDV…RKFMNKPVRI (171 aa)) form the Helicase ATP-binding domain. 84-91 (AQSGTGKT) contributes to the ATP binding site. Positions 189–192 (DEAD) match the DEAD box motif. One can recognise a Helicase C-terminal domain in the interval 252–413 (GIKQFYVNVD…ELPSNVADLL (162 aa)).

It belongs to the DEAD box helicase family. eIF4A subfamily. EIF4F is a multi-subunit complex, the composition of which varies with external and internal environmental conditions. It is composed of at least EIF4A, EIF4E and EIF4G. In terms of tissue distribution, pollen specific.

It catalyses the reaction ATP + H2O = ADP + phosphate + H(+). ATP-dependent RNA helicase which is a subunit of the eIF4F complex involved in cap recognition and is required for mRNA binding to ribosome. In the current model of translation initiation, eIF4A unwinds RNA secondary structures in the 5'-UTR of mRNAs which is necessary to allow efficient binding of the small ribosomal subunit, and subsequent scanning for the initiator codon. The chain is Eukaryotic initiation factor 4A-8 from Nicotiana tabacum (Common tobacco).